Reading from the N-terminus, the 258-residue chain is tRNA pseudouridine synthase A (258 aa).

D52 (nucleophile) is an active-site residue. Y110 contacts substrate.

It belongs to the tRNA pseudouridine synthase TruA family. As to quaternary structure, homodimer.

The enzyme catalyses uridine(38/39/40) in tRNA = pseudouridine(38/39/40) in tRNA. In terms of biological role, formation of pseudouridine at positions 38, 39 and 40 in the anticodon stem and loop of transfer RNAs. This chain is tRNA pseudouridine synthase A, found in Francisella tularensis subsp. tularensis (strain FSC 198).